The primary structure comprises 80 residues: Saposin-B-Val (80 aa).

Positions 1–80 (GDVCQDCIQM…CGLVGFCEEV (80 aa)) constitute a Saposin B-type domain. 3 cysteine pairs are disulfide-bonded: C4/C77, C7/C71, and C36/C47. A glycan (N-linked (GlcNAc...) (complex) asparagine) is linked at N21.

Saposin-B is a homodimer. Interacts with GRN; facilitates lysosomal delivery of progranulin from the extracellular space and the biosynthetic pathway. Post-translationally, the one residue extended Saposin-B-Val is only found in a minority of the chains.

Its function is as follows. Saposin-B stimulates the hydrolysis of galacto-cerebroside sulfate by arylsulfatase A (EC 3.1.6.8), GM1 gangliosides by beta-galactosidase (EC 3.2.1.23) and globotriaosylceramide by alpha-galactosidase A (EC 3.2.1.22). Saposin-B forms a solubilizing complex with the substrates of the sphingolipid hydrolases. The sequence is that of Saposin-B-Val (PSAP) from Sus scrofa (Pig).